A 110-amino-acid polypeptide reads, in one-letter code: U1-lycotoxin-Ls1aa (110 aa).

The first 20 residues, 1–20 (MKFVLLFGVLLVTLFSYSSA), serve as a signal peptide directing secretion. The propeptide occupies 21–44 (EMLDDFDQADEDELLSLIEKEEAR). Intrachain disulfides connect cysteine 47–cysteine 62, cysteine 54–cysteine 71, cysteine 61–cysteine 89, and cysteine 73–cysteine 87.

Belongs to the neurotoxin 19 (CSTX) family. 03 subfamily. In terms of tissue distribution, expressed by the venom gland.

It localises to the secreted. This is U1-lycotoxin-Ls1aa from Lycosa singoriensis (Wolf spider).